The chain runs to 432 residues: Serine hydroxymethyltransferase (432 aa).

(6S)-5,6,7,8-tetrahydrofolate-binding positions include leucine 131 and glycine 135–leucine 137. At lysine 240 the chain carries N6-(pyridoxal phosphate)lysine.

It belongs to the SHMT family. In terms of assembly, homodimer. The cofactor is pyridoxal 5'-phosphate.

It is found in the cytoplasm. It catalyses the reaction (6R)-5,10-methylene-5,6,7,8-tetrahydrofolate + glycine + H2O = (6S)-5,6,7,8-tetrahydrofolate + L-serine. Its pathway is one-carbon metabolism; tetrahydrofolate interconversion. It participates in amino-acid biosynthesis; glycine biosynthesis; glycine from L-serine: step 1/1. In terms of biological role, catalyzes the reversible interconversion of serine and glycine with tetrahydrofolate (THF) serving as the one-carbon carrier. This reaction serves as the major source of one-carbon groups required for the biosynthesis of purines, thymidylate, methionine, and other important biomolecules. Also exhibits THF-independent aldolase activity toward beta-hydroxyamino acids, producing glycine and aldehydes, via a retro-aldol mechanism. The chain is Serine hydroxymethyltransferase from Bradyrhizobium diazoefficiens (strain JCM 10833 / BCRC 13528 / IAM 13628 / NBRC 14792 / USDA 110).